The following is a 477-amino-acid chain: Multidrug resistance protein PmpM (477 aa).

Helical transmembrane passes span 21–41, 56–76, 104–124, 133–153, 171–191, 202–222, 253–273, 286–306, 326–346, 360–380, 398–418, and 431–451; these read LLTL…MGFV, AVAL…GTLL, LALL…EPIL, LIGP…AAAL, MVLG…LIYG, GCGW…LFWV, LPIG…ALLI, IALN…MAVT, GVGM…MLLL, VIAI…SDAL, MIMT…SLGL, and LWQG…IRLA.

This sequence belongs to the multi antimicrobial extrusion (MATE) (TC 2.A.66.1) family.

Its subcellular location is the cell inner membrane. In terms of biological role, multidrug efflux pump that functions as an H(+)/drug antiporter. Confers resistance to benzalkonium chloride, fluoroquinolones, ethidium bromide, acriflavine and tetraphenylphosphonium chloride. The sequence is that of Multidrug resistance protein PmpM (pmpM) from Pseudomonas aeruginosa (strain ATCC 15692 / DSM 22644 / CIP 104116 / JCM 14847 / LMG 12228 / 1C / PRS 101 / PAO1).